Here is a 264-residue protein sequence, read N- to C-terminus: Thiazole synthase (264 aa).

Lys-106 acts as the Schiff-base intermediate with DXP in catalysis. 1-deoxy-D-xylulose 5-phosphate-binding positions include Gly-167, 193–194 (AG), and 215–216 (NS).

Belongs to the ThiG family. As to quaternary structure, homotetramer. Forms heterodimers with either ThiH or ThiS.

Its subcellular location is the cytoplasm. It catalyses the reaction [ThiS sulfur-carrier protein]-C-terminal-Gly-aminoethanethioate + 2-iminoacetate + 1-deoxy-D-xylulose 5-phosphate = [ThiS sulfur-carrier protein]-C-terminal Gly-Gly + 2-[(2R,5Z)-2-carboxy-4-methylthiazol-5(2H)-ylidene]ethyl phosphate + 2 H2O + H(+). It functions in the pathway cofactor biosynthesis; thiamine diphosphate biosynthesis. Functionally, catalyzes the rearrangement of 1-deoxy-D-xylulose 5-phosphate (DXP) to produce the thiazole phosphate moiety of thiamine. Sulfur is provided by the thiocarboxylate moiety of the carrier protein ThiS. In vitro, sulfur can be provided by H(2)S. This Prochlorococcus marinus (strain MIT 9301) protein is Thiazole synthase.